A 215-amino-acid chain; its full sequence is Ribosomal RNA small subunit methyltransferase G (215 aa).

S-adenosyl-L-methionine is bound by residues glycine 78, leucine 83, 128–129 (AE), and arginine 146.

The protein belongs to the methyltransferase superfamily. RNA methyltransferase RsmG family.

The protein localises to the cytoplasm. The enzyme catalyses guanosine(527) in 16S rRNA + S-adenosyl-L-methionine = N(7)-methylguanosine(527) in 16S rRNA + S-adenosyl-L-homocysteine. Its function is as follows. Specifically methylates the N7 position of guanine in position 527 of 16S rRNA. The polypeptide is Ribosomal RNA small subunit methyltransferase G (Anaeromyxobacter dehalogenans (strain 2CP-C)).